Reading from the N-terminus, the 241-residue chain is Small ribosomal subunit protein uS2 (241 aa).

This sequence belongs to the universal ribosomal protein uS2 family.

The polypeptide is Small ribosomal subunit protein uS2 (Citrobacter koseri (strain ATCC BAA-895 / CDC 4225-83 / SGSC4696)).